The chain runs to 97 residues: Small ribosomal subunit protein bS6 (97 aa).

Belongs to the bacterial ribosomal protein bS6 family.

Functionally, binds together with bS18 to 16S ribosomal RNA. This is Small ribosomal subunit protein bS6 from Limosilactobacillus fermentum (strain NBRC 3956 / LMG 18251) (Lactobacillus fermentum).